The sequence spans 261 residues: Global transcriptional regulator CodY (261 aa).

Residues 1-159 (MANLLDKTRK…ASTVVGLQLL (159 aa)) are GAF domain. Residues 207 to 226 (ASVIADRIGITRSVIVNALR) constitute a DNA-binding region (H-T-H motif).

It belongs to the CodY family.

The protein resides in the cytoplasm. In terms of biological role, DNA-binding global transcriptional regulator which is involved in the adaptive response to starvation and acts by directly or indirectly controlling the expression of numerous genes in response to nutrient availability. During rapid exponential growth, CodY is highly active and represses genes whose products allow adaptation to nutrient depletion. The polypeptide is Global transcriptional regulator CodY (Streptococcus thermophilus (strain CNRZ 1066)).